We begin with the raw amino-acid sequence, 266 residues long: Glutaconate CoA-transferase subunit B (266 aa).

Residue Glu54 is part of the active site.

This sequence belongs to the 3-oxoacid CoA-transferase subunit B family. As to quaternary structure, heterooctamer of four A and four B subunits.

It localises to the cytoplasm. It catalyses the reaction trans-glutaconate + acetyl-CoA = (2E)-glutaconyl-CoA + acetate. Its pathway is amino-acid degradation; L-glutamate degradation via hydroxyglutarate pathway; crotonoyl-CoA from L-glutamate: step 3/5. Functionally, catalyzes the transfer of the CoA moiety from acetyl-CoA to (R)-2-hydroxyglutarate and related compounds like glutaconate. This chain is Glutaconate CoA-transferase subunit B (gctB), found in Acidaminococcus fermentans (strain ATCC 25085 / DSM 20731 / CCUG 9996 / CIP 106432 / VR4).